The following is a 367-amino-acid chain: Serine/threonine-protein kinase Sgk2 (367 aa).

The segment at 1 to 28 (MASSPVGVPSPQPSRANGNINLGPSANP) is disordered. At serine 10 the chain carries Phosphoserine. Residues 15 to 28 (RANGNINLGPSANP) show a composition bias toward polar residues. In terms of domain architecture, Protein kinase spans 35 to 292 (FDFLKVIGKG…FLDIKNHMFF (258 aa)). ATP-binding positions include 41-49 (IGKGNYGKV) and lysine 64. Positions 68–78 (KKSILKNKEQN) match the Nuclear localization signal motif. The active-site Proton acceptor is the aspartate 159. Phosphothreonine; by PDPK1 is present on threonine 193. Residues 293–367 (SPINWDDLYH…AQDDDDILDS (75 aa)) enclose the AGC-kinase C-terminal domain. Serine 334 and serine 356 each carry phosphoserine. Phosphotyrosine is present on tyrosine 357.

It belongs to the protein kinase superfamily. AGC Ser/Thr protein kinase family. In terms of processing, activated by phosphorylation on Ser-356 by an unknown kinase (may be mTORC2 but not confirmed), transforming it into a substrate for PDPK1 which then phosphorylates it on Thr-193.

Its subcellular location is the cytoplasm. It localises to the nucleus. The catalysed reaction is L-seryl-[protein] + ATP = O-phospho-L-seryl-[protein] + ADP + H(+). It catalyses the reaction L-threonyl-[protein] + ATP = O-phospho-L-threonyl-[protein] + ADP + H(+). Its activity is regulated as follows. Two specific sites, one in the kinase domain (Thr-193) and the other in the C-terminal regulatory region (Ser-356), need to be phosphorylated for its full activation. Functionally, serine/threonine-protein kinase which is involved in the regulation of a wide variety of ion channels, membrane transporters, cell growth, survival and proliferation. Up-regulates Na(+) channels: SCNN1A/ENAC, K(+) channels: KCNA3/Kv1.3, KCNE1 and KCNQ1, amino acid transporter: SLC6A19, glutamate transporter: SLC1A6/EAAT4, glutamate receptors: GRIA1/GLUR1 and GRIK2/GLUR6, Na(+)/H(+) exchanger: SLC9A3/NHE3, and the Na(+)/K(+) ATPase. The chain is Serine/threonine-protein kinase Sgk2 (Sgk2) from Mus musculus (Mouse).